The chain runs to 2349 residues: Reducing polyketide synthase hmp8 (2349 aa).

One can recognise a Ketosynthase family 3 (KS3) domain in the interval 9–435 (HVPVAIIGLA…GTNGHVVLEA (427 aa)). Catalysis depends on for beta-ketoacyl synthase activity residues Cys182, His317, and His357. Residues 551–856 (FVFTGQGAQW…SHNGIKNVAY (306 aa)) are malonyl-CoA:ACP transacylase (MAT) domain. The N-terminal hotdog fold stretch occupies residues 930 to 1066 (RSLIGAPVPM…GLVAIDYEES (137 aa)). The 321-residue stretch at 930–1250 (RSLIGAPVPM…TSELDMDSGK (321 aa)) folds into the PKS/mFAS DH domain. Residues 932–1244 (LIGAPVPMMA…SVKDFRTSEL (313 aa)) form a dehydratase (DH) domain region. Catalysis depends on His962, which acts as the Proton acceptor; for dehydratase activity. A C-terminal hotdog fold region spans residues 1094–1250 (PEHYAHDKFY…TSELDMDSGK (157 aa)). Catalysis depends on Asp1160, which acts as the Proton donor; for dehydratase activity. The tract at residues 1641 to 1953 (GLLDTLKFVP…QGKHRGKMVL (313 aa)) is enoyl reductase (ER) domain. Positions 1977–2157 (ATYLFVGGLG…ISVNLGIMRD (181 aa)) are ketoreductase (KR) domain. Positions 2267 to 2344 (EAAEIITDAL…SFAVKIAEKS (78 aa)) constitute a Carrier domain. Ser2304 carries the post-translational modification O-(pantetheine 4'-phosphoryl)serine.

It functions in the pathway secondary metabolite biosynthesis. Its function is as follows. Reducing polyketide synthase; part of the gene cluster that mediates the biosynthesis of hypothemycin, a resorcylic acid lactone (RAL) that irreversibly inhibits a subset of protein kinases with a conserved cysteine in the ATP binding site such as human ERK2. The first step is performed by both PKSs hmp3 and hmp8 and leads to the production of 7',8'-dehydrozearalenol (DHZ). The highly reducing PKS hpm8 synthesizes the reduced hexaketide (7S,11S,2E,8E)-7,11-dihydroxy-dodeca-2,8-dienoate, which is transferred downstream to the non-reducing PKS hpm3. Hpm3 then extends the reduced hexaketide to a nonaketide, after which regioselective cyclization and macrolactonization affords DHZ. The next step is the conversion of DHZ into aigialomycin C and is performed by the O-methyltransferase hmp5, the FAD-binding monooxygenase hmp7, and the cytochrome P450 monooxygenase hmp1. The wide substrate tolerance of the hmp5 and hmp7 implies that the reactions from DHZ to aigialomycin C can occur in any order. The steps from aigialomycin C to hypothemycin are less well established. The FAD-linked oxidoreductase hmp9 presumably catalyzes oxidation of the C-6' hydroxyl to a ketone. The timing of this oxidation is important, since the resulting enone functional group is a Michael acceptor that can react spontaneously with glutathione, an abundant metabolite in fungal cells. The glutathione S-transferase hmp2 catalyzes cis-trans isomerization of the 7',8' double bond with equilibrium favoring the trans isomer. The hpm6-encoded transporter might preferentially pump hypothemycin out of the cell relative to the trans isomer aigialomycin A. The cis-to-trans isomerization may be coupled with C-4' hydroxylation, since all known hypothemycin analogs containing the enone functional group also have hydroxyl groups at both C-4' and C-5'. The protein is Reducing polyketide synthase hmp8 of Hypomyces subiculosus (Nectria subiculosa).